Reading from the N-terminus, the 89-residue chain is Small ribosomal subunit protein uS17 (89 aa).

Belongs to the universal ribosomal protein uS17 family. As to quaternary structure, part of the 30S ribosomal subunit.

One of the primary rRNA binding proteins, it binds specifically to the 5'-end of 16S ribosomal RNA. This is Small ribosomal subunit protein uS17 from Syntrophomonas wolfei subsp. wolfei (strain DSM 2245B / Goettingen).